Consider the following 300-residue polypeptide: UDP-3-O-acyl-N-acetylglucosamine deacetylase (300 aa).

Positions 78, 237, and 241 each coordinate Zn(2+). His-264 functions as the Proton donor in the catalytic mechanism.

It belongs to the LpxC family. Zn(2+) is required as a cofactor.

The enzyme catalyses a UDP-3-O-[(3R)-3-hydroxyacyl]-N-acetyl-alpha-D-glucosamine + H2O = a UDP-3-O-[(3R)-3-hydroxyacyl]-alpha-D-glucosamine + acetate. It functions in the pathway glycolipid biosynthesis; lipid IV(A) biosynthesis; lipid IV(A) from (3R)-3-hydroxytetradecanoyl-[acyl-carrier-protein] and UDP-N-acetyl-alpha-D-glucosamine: step 2/6. In terms of biological role, catalyzes the hydrolysis of UDP-3-O-myristoyl-N-acetylglucosamine to form UDP-3-O-myristoylglucosamine and acetate, the committed step in lipid A biosynthesis. The protein is UDP-3-O-acyl-N-acetylglucosamine deacetylase of Acinetobacter baumannii (strain AB307-0294).